The sequence spans 265 residues: MSEHRARKRFGQNFLSDPNIIRKIIDAIHPVPGETVVEIGPGLGAMTDPLVERLGHLHVVEIDRDLIARLHERYSPERLTIHEGDALKFDFATLGAPLRVVGNLPYNISTPLLFHLAEFAARVRDMTFMLQKEVVMRMVAEPGTEDYGRLSVMLQYRFRMGRLFDVPPGAFRPAPKVTSSIVRMVPLPAEQRTAKDEALLERVVAAAFGQRRKTLRNTLREWLDEADFPALGIDPGLRGERLTVADYVAITNYIAAKSPRALANA.

S-adenosyl-L-methionine is bound by residues N13, L15, G40, E61, D85, and N103.

The protein belongs to the class I-like SAM-binding methyltransferase superfamily. rRNA adenine N(6)-methyltransferase family. RsmA subfamily.

The protein localises to the cytoplasm. The catalysed reaction is adenosine(1518)/adenosine(1519) in 16S rRNA + 4 S-adenosyl-L-methionine = N(6)-dimethyladenosine(1518)/N(6)-dimethyladenosine(1519) in 16S rRNA + 4 S-adenosyl-L-homocysteine + 4 H(+). Its function is as follows. Specifically dimethylates two adjacent adenosines (A1518 and A1519) in the loop of a conserved hairpin near the 3'-end of 16S rRNA in the 30S particle. May play a critical role in biogenesis of 30S subunits. The sequence is that of Ribosomal RNA small subunit methyltransferase A from Aromatoleum aromaticum (strain DSM 19018 / LMG 30748 / EbN1) (Azoarcus sp. (strain EbN1)).